A 207-amino-acid chain; its full sequence is Holliday junction branch migration complex subunit RuvA (207 aa).

Residues 1-68 (MIGYLQGSLA…EDQWLLFGFL (68 aa)) are domain I. The interval 69 to 147 (QMAERDLFRQ…EWREEAGLLP (79 aa)) is domain II. A flexible linker region spans residues 148-158 (SATAAPIAAVQ). A domain III region spans residues 158-207 (QEDVEMTLLALGYNNREILQALTAIAQENLVQSGQPAEDWIREAIAWLSR).

This sequence belongs to the RuvA family. In terms of assembly, homotetramer. Forms an RuvA(8)-RuvB(12)-Holliday junction (HJ) complex. HJ DNA is sandwiched between 2 RuvA tetramers; dsDNA enters through RuvA and exits via RuvB. An RuvB hexamer assembles on each DNA strand where it exits the tetramer. Each RuvB hexamer is contacted by two RuvA subunits (via domain III) on 2 adjacent RuvB subunits; this complex drives branch migration. In the full resolvosome a probable DNA-RuvA(4)-RuvB(12)-RuvC(2) complex forms which resolves the HJ.

It is found in the cytoplasm. In terms of biological role, the RuvA-RuvB-RuvC complex processes Holliday junction (HJ) DNA during genetic recombination and DNA repair, while the RuvA-RuvB complex plays an important role in the rescue of blocked DNA replication forks via replication fork reversal (RFR). RuvA specifically binds to HJ cruciform DNA, conferring on it an open structure. The RuvB hexamer acts as an ATP-dependent pump, pulling dsDNA into and through the RuvAB complex. HJ branch migration allows RuvC to scan DNA until it finds its consensus sequence, where it cleaves and resolves the cruciform DNA. The polypeptide is Holliday junction branch migration complex subunit RuvA (Synechococcus elongatus (strain ATCC 33912 / PCC 7942 / FACHB-805) (Anacystis nidulans R2)).